The following is a 356-amino-acid chain: Ferrochelatase (356 aa).

His214 and Glu295 together coordinate Fe cation.

It belongs to the ferrochelatase family.

It localises to the cytoplasm. The catalysed reaction is heme b + 2 H(+) = protoporphyrin IX + Fe(2+). It functions in the pathway porphyrin-containing compound metabolism; protoheme biosynthesis; protoheme from protoporphyrin-IX: step 1/1. In terms of biological role, catalyzes the ferrous insertion into protoporphyrin IX. The sequence is that of Ferrochelatase from Paraburkholderia xenovorans (strain LB400).